Consider the following 407-residue polypeptide: Cysteine desulfurase (407 aa).

K226 bears the N6-(pyridoxal phosphate)lysine mark. C364 (cysteine persulfide intermediate) is an active-site residue.

The protein belongs to the class-V pyridoxal-phosphate-dependent aminotransferase family. Csd subfamily. Homodimer. Interacts with SufE and the SufBCD complex composed of SufB, SufC and SufD. The interaction with SufE is required to mediate the direct transfer of the sulfur atom from the S-sulfanylcysteine. Pyridoxal 5'-phosphate is required as a cofactor.

Its subcellular location is the cytoplasm. It catalyses the reaction (sulfur carrier)-H + L-cysteine = (sulfur carrier)-SH + L-alanine. It carries out the reaction L-selenocysteine + AH2 = hydrogenselenide + L-alanine + A + H(+). It participates in cofactor biosynthesis; iron-sulfur cluster biosynthesis. Functionally, cysteine desulfurases mobilize the sulfur from L-cysteine to yield L-alanine, an essential step in sulfur metabolism for biosynthesis of a variety of sulfur-containing biomolecules. Component of the suf operon, which is activated and required under specific conditions such as oxidative stress and iron limitation. Acts as a potent selenocysteine lyase in vitro, that mobilizes selenium from L-selenocysteine. Selenocysteine lyase activity is however unsure in vivo. The protein is Cysteine desulfurase of Pectobacterium atrosepticum (strain SCRI 1043 / ATCC BAA-672) (Erwinia carotovora subsp. atroseptica).